A 496-amino-acid chain; its full sequence is Amino-acid acetyltransferase, mitochondrial (496 aa).

The region spanning 333–493 is the N-acetyltransferase domain; that stretch reads YHGTDCLTNG…LDVIDSIQPT (161 aa).

It belongs to the acetyltransferase family.

The protein localises to the mitochondrion. The enzyme catalyses L-glutamate + acetyl-CoA = N-acetyl-L-glutamate + CoA + H(+). It participates in amino-acid biosynthesis; L-arginine biosynthesis; N(2)-acetyl-L-ornithine from L-glutamate: step 1/4. Functionally, N-acetylglutamate synthase involved in arginine biosynthesis. The protein is Amino-acid acetyltransferase, mitochondrial (arg2) of Schizosaccharomyces japonicus (strain yFS275 / FY16936) (Fission yeast).